The primary structure comprises 1083 residues: Voltage-gated inwardly rectifying potassium channel KCNH3 (1083 aa).

Over 1–228 (MPAMRGLLAP…HCGALRATWD (228 aa)) the chain is Cytoplasmic. In terms of domain architecture, PAS spans 18–90 (IATRFDGTHS…QQIRKALDEH (73 aa)). The 53-residue stretch at 93-145 (FKAELILYRKSGLPFWCLLDVIPIKNEKGEVALFLVSHKDISETKNRGGPDRW) folds into the PAC domain. The span at 137–150 (KNRGGPDRWKETGG) shows a compositional bias: basic and acidic residues. Residues 137–157 (KNRGGPDRWKETGGGRRRYGR) are disordered. The helical transmembrane segment at 229 to 249 (GFILLATLYVAVTVPYSVCVS) threads the bilayer. Topologically, residues 250 to 259 (TAREPSAARG) are extracellular. Residues 260–280 (PPSVCDLAVEVLFILDIVLNF) form a helical membrane-spanning segment. Residues 281–302 (RTTFVSKSGQVVFAPKSICLHY) lie on the Cytoplasmic side of the membrane. Residues 303-323 (VTTWFLLDVIAALPFDLLHAF) form a helical membrane-spanning segment. The Extracellular portion of the chain corresponds to 324–331 (KVNVYFGA). A helical; Voltage-sensor membrane pass occupies residues 332–352 (HLLKTVRLLRLLRLLPRLDRY). The Cytoplasmic portion of the chain corresponds to 353-361 (SQYSAVVLT). Residues 362 to 382 (LLMAVFALLAHWVACVWFYIG) traverse the membrane as a helical segment. The Extracellular portion of the chain corresponds to 383–453 (QREIESSESE…GGPSLRSAYI (71 aa)). 3 N-linked (GlcNAc...) asparagine glycosylation sites follow: N421, N428, and N436. Residues 454–474 (TSLYFALSSLTSVGFGNVSAN) constitute an intramembrane region (pore-forming). The Selectivity filter motif lies at 465-470 (SVGFGN). The Extracellular segment spans residues 475-479 (TDTEK). The chain crosses the membrane as a helical span at residues 480–500 (IFSICTMLIGALMHAVVFGNV). At 501 to 1083 (TAIIQRMYAR…QWTQEEGTGV (583 aa)) the chain is on the cytoplasmic side. 582-697 (LFEAASRGCL…FAPRFSRGLR (116 aa)) serves as a coordination point for a nucleoside 3',5'-cyclic phosphate. Disordered regions lie at residues 729-810 (EEKE…LRLP), 832-873 (CGSD…SEAR), and 972-1055 (MAPW…ALPW). The span at 773–785 (TAPRPRLGGRGRP) shows a compositional bias: basic residues. The segment covering 844-861 (GQSGPECSSSPSPGPESG) has biased composition (low complexity).

The protein belongs to the potassium channel family. H (Eag) (TC 1.A.1.20) subfamily. Kv12.2/KCNH3 sub-subfamily. In terms of assembly, the potassium channel is probably composed of a homo- or heterotetrameric complex of pore-forming alpha subunits that can associate with modulating beta subunits. Interacts with KCNE1 and KCNE3; these interactions regulate KCNH3 trafficking to the plasma membrane and its subsequent voltage-gated potassium channel activity. In terms of processing, N-glycosylated. N-glycosylation mediates traffick to the cell membrane but is not necessary for voltage-gated potassium channel activity. Detected only in brain, in particular in the telencephalon. Detected in the cerebral cortex, occipital pole, frontal and temporal lobe, putamen, amygdala, hippocampus and caudate nucleus.

It localises to the cell membrane. The enzyme catalyses K(+)(in) = K(+)(out). Pore-forming (alpha) subunit of a voltage-gated inwardly rectifying potassium channel. Charactherized by a fast rate of activation during depolarization followed by a rapid inactivation at much more depolarized value causing inward rectification due to a C-type inactivation mechanism. Exhibits a rapid recovery from inactivation. This Homo sapiens (Human) protein is Voltage-gated inwardly rectifying potassium channel KCNH3.